The following is a 743-amino-acid chain: FHF complex subunit HOOK-interacting protein 2B (743 aa).

Positions Cys186–Ser219 are disordered. The span at Thr196–His206 shows a compositional bias: basic and acidic residues.

Belongs to the FHIP family. In terms of tissue distribution, expressed in liver.

Its function is as follows. Able to activate MAPK/ERK and TGFB signaling pathways. May regulate the activity of genes involved in intestinal barrier function and immunoprotective inflammation. May play a role in cell proliferation. This Homo sapiens (Human) protein is FHF complex subunit HOOK-interacting protein 2B.